A 184-amino-acid polypeptide reads, in one-letter code: ATP synthase subunit b 1 (184 aa).

A helical transmembrane segment spans residues leucine 4–serine 24.

The protein belongs to the ATPase B chain family. F-type ATPases have 2 components, F(1) - the catalytic core - and F(0) - the membrane proton channel. F(1) has five subunits: alpha(3), beta(3), gamma(1), delta(1), epsilon(1). F(0) has three main subunits: a(1), b(2) and c(10-14). The alpha and beta chains form an alternating ring which encloses part of the gamma chain. F(1) is attached to F(0) by a central stalk formed by the gamma and epsilon chains, while a peripheral stalk is formed by the delta and b chains.

Its subcellular location is the cell inner membrane. Functionally, f(1)F(0) ATP synthase produces ATP from ADP in the presence of a proton or sodium gradient. F-type ATPases consist of two structural domains, F(1) containing the extramembraneous catalytic core and F(0) containing the membrane proton channel, linked together by a central stalk and a peripheral stalk. During catalysis, ATP synthesis in the catalytic domain of F(1) is coupled via a rotary mechanism of the central stalk subunits to proton translocation. Its function is as follows. Component of the F(0) channel, it forms part of the peripheral stalk, linking F(1) to F(0). The protein is ATP synthase subunit b 1 of Cereibacter sphaeroides (strain ATCC 17025 / ATH 2.4.3) (Rhodobacter sphaeroides).